Here is a 318-residue protein sequence, read N- to C-terminus: Decaprenyl-phosphate phosphoribosyltransferase (318 aa).

The next 2 membrane-spanning stretches (helical) occupy residues 33-53 and 59-79; these read WIKN…GIEY and AAKV…IYLI. 5-phospho-alpha-D-ribose 1-diphosphate-binding residues include Lys-35 and Tyr-77. Positions 80 and 84 each coordinate Mg(2+). Residue Lys-94 coordinates 5-phospho-alpha-D-ribose 1-diphosphate. Transmembrane regions (helical) follow at residues 99 to 119 and 121 to 141; these read IAAG…LAVA and LVIS…YIAV. The 5-phospho-alpha-D-ribose 1-diphosphate site is built by Lys-150 and Arg-167. The next 2 membrane-spanning stretches (helical) occupy residues 153-173 and 177-197; these read AVLD…AGGV and IPLS…MAAG. A trans,octa-cis-decaprenyl phosphate-binding site is contributed by Lys-198. 3 helical membrane passes run 225-245, 262-282, and 298-318; these read LRFV…LWAF, SWYA…AVDI, and RVLQ…IYFS.

Belongs to the UbiA prenyltransferase family. DPPR synthase subfamily. Mg(2+) is required as a cofactor.

The protein resides in the cell inner membrane. The catalysed reaction is trans,octa-cis-decaprenyl phosphate + 5-phospho-alpha-D-ribose 1-diphosphate + H(+) = trans,octa-cis-decaprenylphospho-beta-D-ribofuranose 5-phosphate + diphosphate. It functions in the pathway cell wall biogenesis; cell wall polysaccharide biosynthesis. Its function is as follows. Involved in the biosynthesis of decaprenylphosphoryl arabinose (DPA) a precursor for arabinan synthesis in mycobacterial cell wall biosynthesis. Catalyzes the transfer of a 5-phosphoribosyl residue from phosphoribose diphosphate (PRPP) to decaprenyl phosphate (DP) to form decaprenylphosphoryl-5-phosphoribose (DPPR). The polypeptide is Decaprenyl-phosphate phosphoribosyltransferase (Mycolicibacterium smegmatis (strain ATCC 700084 / mc(2)155) (Mycobacterium smegmatis)).